Consider the following 495-residue polypeptide: MLRLINKTINKNDLIKINNSKRFCSTTTNSTINKDNIYDIIIIGGGLVGSTMACSIGNNNTTKHLKVALIESSKIQTVEQSISNAIPEIRTISFNNQTIELFKSINVWDTIKSTKRVNPFNQVRVWDTSGFEGIHFQDNDIIDDGNNTTAMGYIIENNIVTSSLLSKVKQFENIELFEQLSVKSMNDYNEETIRTTSILPSVTLSNDQQLHAKLIIGADGGNSILKKQLQVPSIGRVYNQKAVVCTLKLGIKQDNNNNSSNNNNNNNNTLFQRFLPTGPIALLPLANGYANIIWSTNLMHAQYLLELDDESFLEQVKDSFLKSPSTSNSSFFEIASNLFNLNPKGLSGNEIYLPPIEGLVSKRASFPLRIDHTFNYTLPRVCFIGDASHLVHPMAGQGVNLGMADVKTLSSIIEQSVQSGYDIGDAMMLKRFEEIRKPENLKMLLSIDTLFNLFTNNSIFVTGLRNFGMSLLNNISPLKNLIIGVSKGESILKFK.

This sequence belongs to the UbiH/COQ6 family. Component of a multi-subunit COQ enzyme complex. The cofactor is FAD.

It is found in the mitochondrion inner membrane. The enzyme catalyses a 4-hydroxy-3-(all-trans-polyprenyl)benzoate + 2 reduced [2Fe-2S]-[ferredoxin] + O2 + 2 H(+) = a 3,4-dihydroxy-5-(all-trans-polyprenyl)benzoate + 2 oxidized [2Fe-2S]-[ferredoxin] + H2O. The catalysed reaction is a 2-methoxy-6-(all-trans-polyprenyl)phenol + 2 reduced [2Fe-2S]-[ferredoxin] + O2 + 2 H(+) = a 2-methoxy-6-(all-trans-polyprenyl)benzene-1,4-diol + 2 oxidized [2Fe-2S]-[ferredoxin] + H2O. It participates in cofactor biosynthesis; ubiquinone biosynthesis. FAD-dependent monooxygenase required for two non-consecutive steps during ubiquinone biosynthesis. Required for the C5-ring hydroxylation during ubiquinone biosynthesis by catalyzing the hydroxylation of 4-hydroxy-3-(all-trans-polyprenyl)benzoic acid to 3,4-dihydroxy-5-(all-trans-polyprenyl)benzoic acid. Also acts downstream of coq4, for the C1-hydroxylation during ubiquinone biosynthesis by catalyzing the hydroxylation of 2-methoxy-6-(all-trans-polyprenyl)phenol to 2-methoxy-6-(all-trans-polyprenyl)benzene-1,4-diol. The electrons required for the hydroxylation reaction are funneled indirectly to coq6 from NADPH via a ferredoxin/ferredoxin reductase system. The polypeptide is Ubiquinone biosynthesis monooxygenase COQ6, mitochondrial (Dictyostelium discoideum (Social amoeba)).